The following is a 574-amino-acid chain: Putative thiamine pyrophosphate-containing protein YdaP (574 aa).

Residues 28–55 (DSINEFIEELRHERNQLKFIQTRHEEVA) adopt a coiled-coil conformation. Position 52 (E52) interacts with thiamine diphosphate. Residues 256 to 277 (IGTKPAYEAMEECDLLIMLGTS) and 294 to 313 (DSDPAKIGKRYPVTAGLVCD) each bind FAD. A thiamine pyrophosphate binding region spans residues 384-464 (TVTVWMARHF…ITVVILNNEN (81 aa)). Mg(2+)-binding residues include D435 and N462.

Belongs to the TPP enzyme family. It depends on Mg(2+) as a cofactor. Requires thiamine diphosphate as cofactor.

This is Putative thiamine pyrophosphate-containing protein YdaP (ydaP) from Bacillus subtilis (strain 168).